A 324-amino-acid polypeptide reads, in one-letter code: Acetyl-coenzyme A carboxylase carboxyl transferase subunit alpha (324 aa).

Residues 37-291 (KLDKRLDRLK…QEYVLQEWVK (255 aa)) enclose the CoA carboxyltransferase C-terminal domain.

The protein belongs to the AccA family. Acetyl-CoA carboxylase is a heterohexamer composed of biotin carboxyl carrier protein (AccB), biotin carboxylase (AccC) and two subunits each of ACCase subunit alpha (AccA) and ACCase subunit beta (AccD).

The protein resides in the cytoplasm. The catalysed reaction is N(6)-carboxybiotinyl-L-lysyl-[protein] + acetyl-CoA = N(6)-biotinyl-L-lysyl-[protein] + malonyl-CoA. Its pathway is lipid metabolism; malonyl-CoA biosynthesis; malonyl-CoA from acetyl-CoA: step 1/1. In terms of biological role, component of the acetyl coenzyme A carboxylase (ACC) complex. First, biotin carboxylase catalyzes the carboxylation of biotin on its carrier protein (BCCP) and then the CO(2) group is transferred by the carboxyltransferase to acetyl-CoA to form malonyl-CoA. This is Acetyl-coenzyme A carboxylase carboxyl transferase subunit alpha from Chlamydia trachomatis serovar L2 (strain ATCC VR-902B / DSM 19102 / 434/Bu).